The chain runs to 281 residues: Glyceraldehyde dehydrogenase medium chain (281 aa).

The FAD-binding PCMH-type domain occupies 1 to 176; it reads MYPPEFSYVR…TQIEVPVLDG (176 aa). FAD contacts are provided by residues 31 to 35 and 110 to 114; these read AGGQS and TIGGA.

In terms of assembly, heterotrimer composed of a large chain (CutA), a medium chain (CutB) and a small chain (CutC). FAD serves as cofactor.

It is found in the cytoplasm. The enzyme catalyses D-glyceraldehyde + A + H2O = (R)-glycerate + AH2 + H(+). Component of the glyceraldehyde dehydrogenase which is involved the nonphosphorylated Entner-Doudoroff pathway. Catalyzes the oxidation of D-glyceraldehyde to yield glycerate. When the artificial electron acceptor 2,6-dichlorophenol-indophenol (Cl2Ind) is used, the enzyme shows a broad substrate range (glyceraldehyde-3-phosphate, formaldehyde, acetaldehyde, propionaldehyde and isobutyraldehyde), but is most active with D-glyceraldehyde. It is not known which acceptor is utilized in vivo. The sequence is that of Glyceraldehyde dehydrogenase medium chain (cutB) from Sulfolobus acidocaldarius (strain ATCC 33909 / DSM 639 / JCM 8929 / NBRC 15157 / NCIMB 11770).